A 314-amino-acid polypeptide reads, in one-letter code: tRNA dimethylallyltransferase (314 aa).

10–17 (GPTAVGKT) lines the ATP pocket. Residue 12-17 (TAVGKT) coordinates substrate. Interaction with substrate tRNA stretches follow at residues 35-38 (DSMQ), 160-164 (RRVIR), 239-244 (QAIGYK), and 272-279 (KRQLTWFR).

This sequence belongs to the IPP transferase family. As to quaternary structure, monomer. The cofactor is Mg(2+).

The enzyme catalyses adenosine(37) in tRNA + dimethylallyl diphosphate = N(6)-dimethylallyladenosine(37) in tRNA + diphosphate. Functionally, catalyzes the transfer of a dimethylallyl group onto the adenine at position 37 in tRNAs that read codons beginning with uridine, leading to the formation of N6-(dimethylallyl)adenosine (i(6)A). In Halalkalibacterium halodurans (strain ATCC BAA-125 / DSM 18197 / FERM 7344 / JCM 9153 / C-125) (Bacillus halodurans), this protein is tRNA dimethylallyltransferase (miaA).